We begin with the raw amino-acid sequence, 257 residues long: tRNA (guanine-N(7)-)-methyltransferase (257 aa).

The span at 1–12 shows a compositional bias: acidic residues; sequence MARDSEDQDMET. The tract at residues 1–25 is disordered; the sequence is MARDSEDQDMETETNGAAEGLDPTS. Residues Gly80, 103 to 104, 138 to 139, and Leu158 each bind S-adenosyl-L-methionine; these read EI and NA. Asp161 is a catalytic residue. 236–238 contributes to the S-adenosyl-L-methionine binding site; that stretch reads SEE.

Belongs to the class I-like SAM-binding methyltransferase superfamily. TrmB family.

The protein resides in the nucleus. It carries out the reaction guanosine(46) in tRNA + S-adenosyl-L-methionine = N(7)-methylguanosine(46) in tRNA + S-adenosyl-L-homocysteine. It participates in tRNA modification; N(7)-methylguanine-tRNA biosynthesis. In terms of biological role, catalyzes the formation of N(7)-methylguanine at position 46 (m7G46) in tRNA. The chain is tRNA (guanine-N(7)-)-methyltransferase from Drosophila ananassae (Fruit fly).